A 138-amino-acid chain; its full sequence is Ribosome-binding factor A (138 aa).

It belongs to the RbfA family. Monomer. Binds 30S ribosomal subunits, but not 50S ribosomal subunits or 70S ribosomes.

Its subcellular location is the cytoplasm. In terms of biological role, one of several proteins that assist in the late maturation steps of the functional core of the 30S ribosomal subunit. Associates with free 30S ribosomal subunits (but not with 30S subunits that are part of 70S ribosomes or polysomes). Required for efficient processing of 16S rRNA. May interact with the 5'-terminal helix region of 16S rRNA. This Bradyrhizobium sp. (strain ORS 278) protein is Ribosome-binding factor A.